A 614-amino-acid polypeptide reads, in one-letter code: Adenylate kinase 7 (614 aa).

An adenylate kinase region spans residues 258-503 (PIKICILGPP…KEIGKPRNYG (246 aa)). 268–273 (AVGKSS) lines the ATP pocket. Residues 288 to 346 (KMKDVIAEAIAKLEAIVAPKDSVEGEEEGEEEEEEENVDDAQELLDGIKESMEQNAGRL) are NMP. Residues 308–327 (DSVEGEEEGEEEEEEENVDD) form a disordered region. Residues 311 to 327 (EGEEEGEEEEEEENVDD) show a composition bias toward acidic residues. AMP-binding positions include 323-346 (ENVD…AGRL), 373-376 (GFPK), and glutamine 380. Positions 376 to 568 (KTYDQAKDLF…EERELLEVQS (193 aa)) form a coiled coil. An LID region spans residues 428–438 (NLPESVVAGTH). Arginine 446 serves as a coordination point for AMP. Residue glycine 478 coordinates ATP. Residues 570–614 (PLRNYLMTYVMPTLMQGLNECCKVRPEDPVDFLAEYLFKNNPEMQ) are DPY-30.

It in the central section; belongs to the adenylate kinase family. In the C-terminal section; belongs to the dpy-30 family.

Its subcellular location is the cytoplasm. It is found in the cytosol. The protein localises to the cell projection. It localises to the cilium. The protein resides in the flagellum. It carries out the reaction AMP + ATP = 2 ADP. It catalyses the reaction a 2'-deoxyribonucleoside 5'-diphosphate + ATP = a 2'-deoxyribonucleoside 5'-triphosphate + ADP. The enzyme catalyses a ribonucleoside 5'-diphosphate + ATP = a ribonucleoside 5'-triphosphate + ADP. Nucleoside monophosphate (NMP) kinase that catalyzes the reversible transfer of the terminal phosphate group between nucleoside triphosphates and monophosphates. Has highest activity toward AMP, and weaker activity toward dAMP, CMP and dCMP. Also displays broad nucleoside diphosphate kinase activity. Involved in maintaining ciliary structure and function. The polypeptide is Adenylate kinase 7 (Ak7) (Mus musculus (Mouse)).